A 281-amino-acid polypeptide reads, in one-letter code: Plasmanylethanolamine desaturase (281 aa).

At 1 to 28 the chain is on the cytoplasmic side; sequence MKTQEIEKKVRQQDAQVLAQGYSPAIRA. The chain crosses the membrane as a helical span at residues 29 to 45; that stretch reads MEIAAIVSFVSLEVALV. Over 46-58 the chain is Periplasmic; that stretch reads YRLWGTPYAGTWL. A helical membrane pass occupies residues 59 to 75; sequence LLSAVLLGYLAADFVSG. At 76–123 the chain is on the cytoplasmic side; sequence FVHWMGDTWGSTEMPVLGKALIRPFREHHVDEKAITRHDFVETNGNNC. A helical membrane pass occupies residues 124–138; the sequence is LISLPVAIIALCLPM. Residues 139–142 are Periplasmic-facing; the sequence is SGPG. The helical transmembrane segment at 143–159 threads the bilayer; that stretch reads WVFCASFLGAMIFWVMA. The Cytoplasmic portion of the chain corresponds to 160–281; the sequence is TNQFHKWSHM…VQEKPASTRP (122 aa). The short motif at 164-168 is the Histidine box-1 element; sequence HKWSH. The short motif at 191–195 is the Histidine box-2 element; sequence HRIHH.

Belongs to the fatty acid desaturase CarF family. In terms of assembly, interacts with CarR.

It localises to the cell inner membrane. The catalysed reaction is a 1-(1,2-saturated alkyl)-2-acyl-sn-glycero-3-phosphoethanolamine + 2 Fe(II)-[cytochrome b5] + O2 + 2 H(+) = a 1-O-(1Z-alkenyl)-2-acyl-sn-glycero-3-phosphoethanolamine + 2 Fe(III)-[cytochrome b5] + 2 H2O. It carries out the reaction 1-O-(13-methyltetradecyl)-2-(13-methyltetradecanoyl)-sn-glycero-3-phosphoethanolamine + 2 Fe(II)-[cytochrome b5] + O2 + 2 H(+) = 1-O-(1Z-13-methyltetradecenyl)-2-(13-methyltetradecanoyl)-sn-glycero-3-phosphoethanolamine + 2 Fe(III)-[cytochrome b5] + 2 H2O. Functionally, plasmanylethanolamine desaturase involved in plasmalogen biogenesis in the membrane, required for light-induced carotenogenesis. Plasmalogens are glycerophospholipids with a hydrocarbon chain linked by a vinyl ether bond at the glycerol sn-1 position, and are involved in antioxidative and signaling mechanisms, most precisely in sensing photooxidative stress through singlet oxygen. Participates in the light-dependent inactivation of the antisigma factor CarR. Mediates signaling by singlet oxygen, generated via photoexcited protoporphyrin IX. The chain is Plasmanylethanolamine desaturase from Myxococcus xanthus.